The primary structure comprises 707 residues: Polyribonucleotide nucleotidyltransferase (707 aa).

Mg(2+) contacts are provided by aspartate 491 and aspartate 497. The KH domain occupies 558–617; it reads PRIEKIKIHPDKIGLLIGPGGKTIKKISAESGAEITIEDDGTVMIYSSSADSLEAAREMI. The S1 motif domain maps to 622 to 695; the sequence is GEVTVGGIYR…EKGRYKFSRK (74 aa).

This sequence belongs to the polyribonucleotide nucleotidyltransferase family. Requires Mg(2+) as cofactor.

It localises to the cytoplasm. It catalyses the reaction RNA(n+1) + phosphate = RNA(n) + a ribonucleoside 5'-diphosphate. Its function is as follows. Involved in mRNA degradation. Catalyzes the phosphorolysis of single-stranded polyribonucleotides processively in the 3'- to 5'-direction. In Methylacidiphilum infernorum (isolate V4) (Methylokorus infernorum (strain V4)), this protein is Polyribonucleotide nucleotidyltransferase.